Here is a 728-residue protein sequence, read N- to C-terminus: Phosphoribosylformylglycinamidine synthase subunit PurL (728 aa).

His-42 is an active-site residue. The ATP site is built by Tyr-45 and Lys-84. Glu-86 lines the Mg(2+) pocket. Residues 87–90 (SHNH) and Arg-109 each bind substrate. Catalysis depends on His-88, which acts as the Proton acceptor. Asp-110 contributes to the Mg(2+) binding site. Residue Gln-237 coordinates substrate. Asp-265 contacts Mg(2+). Residue 309 to 311 (ESQ) coordinates substrate. Positions 491 and 528 each coordinate ATP. Asn-529 contributes to the Mg(2+) binding site. Residue Ser-531 coordinates substrate.

Belongs to the FGAMS family. As to quaternary structure, monomer. Part of the FGAM synthase complex composed of 1 PurL, 1 PurQ and 2 PurS subunits.

The protein localises to the cytoplasm. It carries out the reaction N(2)-formyl-N(1)-(5-phospho-beta-D-ribosyl)glycinamide + L-glutamine + ATP + H2O = 2-formamido-N(1)-(5-O-phospho-beta-D-ribosyl)acetamidine + L-glutamate + ADP + phosphate + H(+). It participates in purine metabolism; IMP biosynthesis via de novo pathway; 5-amino-1-(5-phospho-D-ribosyl)imidazole from N(2)-formyl-N(1)-(5-phospho-D-ribosyl)glycinamide: step 1/2. Part of the phosphoribosylformylglycinamidine synthase complex involved in the purines biosynthetic pathway. Catalyzes the ATP-dependent conversion of formylglycinamide ribonucleotide (FGAR) and glutamine to yield formylglycinamidine ribonucleotide (FGAM) and glutamate. The FGAM synthase complex is composed of three subunits. PurQ produces an ammonia molecule by converting glutamine to glutamate. PurL transfers the ammonia molecule to FGAR to form FGAM in an ATP-dependent manner. PurS interacts with PurQ and PurL and is thought to assist in the transfer of the ammonia molecule from PurQ to PurL. In Campylobacter jejuni subsp. jejuni serotype O:23/36 (strain 81-176), this protein is Phosphoribosylformylglycinamidine synthase subunit PurL.